A 671-amino-acid polypeptide reads, in one-letter code: DNA ligase (671 aa).

Residues 32–36 (DAEYD), 81–82 (SL), and Glu113 contribute to the NAD(+) site. Catalysis depends on Lys115, which acts as the N6-AMP-lysine intermediate. Arg136, Glu173, Lys290, and Lys314 together coordinate NAD(+). Zn(2+)-binding residues include Cys408, Cys411, Cys426, and Cys432. The 79-residue stretch at 593 to 671 (EIDSPFAGKT…EAEMLRLLGS (79 aa)) folds into the BRCT domain.

Belongs to the NAD-dependent DNA ligase family. LigA subfamily. Mg(2+) serves as cofactor. Mn(2+) is required as a cofactor.

It carries out the reaction NAD(+) + (deoxyribonucleotide)n-3'-hydroxyl + 5'-phospho-(deoxyribonucleotide)m = (deoxyribonucleotide)n+m + AMP + beta-nicotinamide D-nucleotide.. DNA ligase that catalyzes the formation of phosphodiester linkages between 5'-phosphoryl and 3'-hydroxyl groups in double-stranded DNA using NAD as a coenzyme and as the energy source for the reaction. It is essential for DNA replication and repair of damaged DNA. The polypeptide is DNA ligase (Shigella dysenteriae serotype 1 (strain Sd197)).